A 274-amino-acid polypeptide reads, in one-letter code: Probable WRKY transcription factor 49 (274 aa).

Residues 108–173 constitute a DNA-binding region (WRKY); it reads NSNGMCDDGY…YEGFHFHYTY (66 aa). Residues 188-228 form a disordered region; the sequence is KTKIHKHNAQDMNKKSQTQEESKEAQLGELTNQNHPVNKAQ. The stretch at 193-222 forms a coiled coil; it reads KHNAQDMNKKSQTQEESKEAQLGELTNQNH. Residues 195-213 are compositionally biased toward basic and acidic residues; that stretch reads NAQDMNKKSQTQEESKEAQ. The span at 216–228 shows a compositional bias: polar residues; it reads ELTNQNHPVNKAQ.

It belongs to the WRKY group II-c family.

The protein localises to the nucleus. Its function is as follows. Transcription factor. Interacts specifically with the W box (5'-(T)TGAC[CT]-3'), a frequently occurring elicitor-responsive cis-acting element. This chain is Probable WRKY transcription factor 49 (WRKY49), found in Arabidopsis thaliana (Mouse-ear cress).